The primary structure comprises 216 residues: Methylthioribulose-1-phosphate dehydratase (216 aa).

His-101 and His-103 together coordinate Zn(2+).

It belongs to the aldolase class II family. MtnB subfamily. Zn(2+) serves as cofactor.

The enzyme catalyses 5-(methylsulfanyl)-D-ribulose 1-phosphate = 5-methylsulfanyl-2,3-dioxopentyl phosphate + H2O. The protein operates within amino-acid biosynthesis; L-methionine biosynthesis via salvage pathway; L-methionine from S-methyl-5-thio-alpha-D-ribose 1-phosphate: step 2/6. Its function is as follows. Catalyzes the dehydration of methylthioribulose-1-phosphate (MTRu-1-P) into 2,3-diketo-5-methylthiopentyl-1-phosphate (DK-MTP-1-P). The sequence is that of Methylthioribulose-1-phosphate dehydratase from Bradyrhizobium sp. (strain BTAi1 / ATCC BAA-1182).